We begin with the raw amino-acid sequence, 360 residues long: ELAV-like protein 2 (360 aa).

The interval 1–36 is disordered; it reads METQLSNGPTCNNTANGPTTVNNNCSSPVDSGNTED. 2 consecutive RRM domains span residues 39–117 and 125–205; these read TNLI…YARP and ANLY…FANN. Serine 221 is subject to Phosphoserine. An RRM 3 domain is found at 277–355; sequence WCIFVYNLAP…RVLQVSFKTN (79 aa).

This sequence belongs to the RRM elav family. In terms of assembly, interacts with IGF2BP1. Interacts with MAP1B light chain LC1. Brain; neural-specific. Expressed in the hippocampus.

Functionally, RNA-binding protein that binds to the 3' untranslated region (3'UTR) of target mRNAs. Seems to recognize a GAAA motif. Can bind to its own 3'UTR, the FOS 3'UTR and the ID 3'UTR. This Mus musculus (Mouse) protein is ELAV-like protein 2 (Elavl2).